A 317-amino-acid chain; its full sequence is Flagellar hook-associated protein 3 (317 aa).

The protein belongs to the bacterial flagellin family.

It localises to the secreted. The protein resides in the bacterial flagellum. This chain is Flagellar hook-associated protein 3 (flgL), found in Escherichia coli (strain K12).